Here is a 321-residue protein sequence, read N- to C-terminus: Lipoyl synthase (321 aa).

Residues Cys-68, Cys-73, Cys-79, Cys-94, Cys-98, Cys-101, and Ser-308 each coordinate [4Fe-4S] cluster. In terms of domain architecture, Radical SAM core spans 80–297 (FNHGTATFMI…KAEAMAMGFT (218 aa)).

This sequence belongs to the radical SAM superfamily. Lipoyl synthase family. It depends on [4Fe-4S] cluster as a cofactor.

It is found in the cytoplasm. It carries out the reaction [[Fe-S] cluster scaffold protein carrying a second [4Fe-4S](2+) cluster] + N(6)-octanoyl-L-lysyl-[protein] + 2 oxidized [2Fe-2S]-[ferredoxin] + 2 S-adenosyl-L-methionine + 4 H(+) = [[Fe-S] cluster scaffold protein] + N(6)-[(R)-dihydrolipoyl]-L-lysyl-[protein] + 4 Fe(3+) + 2 hydrogen sulfide + 2 5'-deoxyadenosine + 2 L-methionine + 2 reduced [2Fe-2S]-[ferredoxin]. The protein operates within protein modification; protein lipoylation via endogenous pathway; protein N(6)-(lipoyl)lysine from octanoyl-[acyl-carrier-protein]: step 2/2. Functionally, catalyzes the radical-mediated insertion of two sulfur atoms into the C-6 and C-8 positions of the octanoyl moiety bound to the lipoyl domains of lipoate-dependent enzymes, thereby converting the octanoylated domains into lipoylated derivatives. This chain is Lipoyl synthase, found in Enterobacter sp. (strain 638).